The primary structure comprises 287 residues: ATP synthase gamma chain (287 aa).

Belongs to the ATPase gamma chain family. In terms of assembly, F-type ATPases have 2 components, CF(1) - the catalytic core - and CF(0) - the membrane proton channel. CF(1) has five subunits: alpha(3), beta(3), gamma(1), delta(1), epsilon(1). CF(0) has three main subunits: a, b and c.

Its subcellular location is the cell inner membrane. In terms of biological role, produces ATP from ADP in the presence of a proton gradient across the membrane. The gamma chain is believed to be important in regulating ATPase activity and the flow of protons through the CF(0) complex. The sequence is that of ATP synthase gamma chain from Shigella sonnei (strain Ss046).